A 178-amino-acid polypeptide reads, in one-letter code: Large ribosomal subunit protein uL5 (178 aa).

Belongs to the universal ribosomal protein uL5 family. Part of the 50S ribosomal subunit; part of the 5S rRNA/L5/L18/L25 subcomplex. Contacts the 5S rRNA and the P site tRNA. Forms a bridge to the 30S subunit in the 70S ribosome.

Its function is as follows. This is one of the proteins that bind and probably mediate the attachment of the 5S RNA into the large ribosomal subunit, where it forms part of the central protuberance. In the 70S ribosome it contacts protein S13 of the 30S subunit (bridge B1b), connecting the 2 subunits; this bridge is implicated in subunit movement. Contacts the P site tRNA; the 5S rRNA and some of its associated proteins might help stabilize positioning of ribosome-bound tRNAs. The chain is Large ribosomal subunit protein uL5 from Psychrobacter cryohalolentis (strain ATCC BAA-1226 / DSM 17306 / VKM B-2378 / K5).